A 576-amino-acid chain; its full sequence is Low-affinity glucose transporter HXT4 (576 aa).

Positions 1-56 are disordered; it reads MSEEAAYQEDTAVQNTPADALSPVESDSNSALSTPSNKAERDDMKDFDENHEESNN. Topologically, residues 1 to 66 are cytoplasmic; the sequence is MSEEAAYQED…YVEIPKKPAS (66 aa). Over residues 25-37 the composition is skewed to polar residues; the sequence is ESDSNSALSTPSN. Basic and acidic residues predominate over residues 38–54; it reads KAERDDMKDFDENHEES. A Glycyl lysine isopeptide (Lys-Gly) (interchain with G-Cter in ubiquitin) cross-link involves residue Lys-45. Residues 67-87 traverse the membrane as a helical segment; the sequence is AYVTVSICCLMVAFGGFVFGW. At 88–122 the chain is on the extracellular side; sequence DTGTISGFVAQTDFIRRFGMKHHDGTYYLSKVRTG. The helical transmembrane segment at 123 to 143 threads the bilayer; the sequence is LMVSIINIGCAIGGIILAKLG. Residues 144–149 are Cytoplasmic-facing; that stretch reads DMYGRK. Residues 150–170 traverse the membrane as a helical segment; that stretch reads MGLIVVVVIYIIGIIIQIASI. The Extracellular segment spans residues 171 to 180; that stretch reads NKWYQYFIGR. A helical membrane pass occupies residues 181–201; it reads IISGLGVGGIAVLSPMLISEV. Residues 202–207 are Cytoplasmic-facing; it reads SPKHIR. Residues 208–228 traverse the membrane as a helical segment; that stretch reads GTLVSCYQLMITLGIFLGYCT. Topologically, residues 229 to 242 are extracellular; that stretch reads NYGTKTYTNSVQWR. A helical transmembrane segment spans residues 243–263; sequence VPLGLGFAWALFMIGGMTFVP. The Cytoplasmic segment spans residues 264 to 346; that stretch reads ESPRYLVEVG…IQSLQQLTGD (83 aa). A helical membrane pass occupies residues 347 to 363; the sequence is NYFFYYGTTVFTAVGLS. Over 364 to 369 the chain is Extracellular; sequence DSFETS. The chain crosses the membrane as a helical span at residues 370-387; it reads IVLGIVNFASTFVGIFLV. The Cytoplasmic portion of the chain corresponds to 388–394; the sequence is ERYGRRR. The chain crosses the membrane as a helical span at residues 395-415; the sequence is CLLWGAASMTACMVVFASVGV. Topologically, residues 416-437 are extracellular; sequence TRLWPNGKKNGSSKGAGNCMIV. An N-linked (GlcNAc...) asparagine glycan is attached at Asn-425. A helical transmembrane segment spans residues 438–458; it reads FTCFYLFCFATTWAPIPFVVN. Topologically, residues 459–475 are cytoplasmic; the sequence is SETFPLRVKSKCMAIAQ. The helical transmembrane segment at 476–496 threads the bilayer; the sequence is ACNWIWGFLIGFFTPFISNAI. Residue Asp-497 is a topological domain, extracellular. Residues 498–518 form a helical membrane-spanning segment; that stretch reads FYYGYVFMGCLVFSYFYVFFF. Residues 519–576 are Cytoplasmic-facing; that stretch reads VPETKGLTLEEVNTLWEEGVLPWKSPSWVPPNKRGTDYNADDLMHDDQPFYKKMFGKK.

Belongs to the major facilitator superfamily. Sugar transporter (TC 2.A.1.1) family.

Its subcellular location is the cell membrane. With respect to regulation, xylose uptake is strongly inhibited by glucose. Its function is as follows. Low-affinity glucose transporter. Can also transport xylose. This is Low-affinity glucose transporter HXT4 (HXT4) from Saccharomyces cerevisiae (strain JAY291) (Baker's yeast).